Consider the following 726-residue polypeptide: Tripartite terminase subunit 1 (726 aa).

The C3H1-type zinc finger occupies 189–217 (CMKCYEELTLTPNQGKSLRKRLHGKFCNH). 626–633 (YNDVFGKR) is an ATP binding site.

This sequence belongs to the herpesviridae TRM1 protein family. As to quaternary structure, associates with TRM2 and TRM3 to form the tripartite terminase complex. Interacts with portal protein.

It localises to the host nucleus. In terms of biological role, component of the molecular motor that translocates viral genomic DNA in empty capsid during DNA packaging. Forms a tripartite terminase complex together with TRM2 and TRM3 in the host cytoplasm. Once the complex reaches the host nucleus, it interacts with the capsid portal vertex. This portal forms a ring in which genomic DNA is translocated into the capsid. TRM1 carries an endonuclease activity that plays an important role for the cleavage of concatemeric viral DNA into unit length genomes. The protein is Tripartite terminase subunit 1 of Human herpesvirus 6B (strain Z29) (HHV-6 variant B).